A 136-amino-acid polypeptide reads, in one-letter code: Aspartate 1-decarboxylase (136 aa).

Serine 25 functions as the Schiff-base intermediate with substrate; via pyruvic acid in the catalytic mechanism. Position 25 is a pyruvic acid (Ser) (serine 25). Residue threonine 57 coordinates substrate. The Proton donor role is filled by tyrosine 58. 73–75 (GAA) contributes to the substrate binding site.

Belongs to the PanD family. As to quaternary structure, heterooctamer of four alpha and four beta subunits. Pyruvate is required as a cofactor. Is synthesized initially as an inactive proenzyme, which is activated by self-cleavage at a specific serine bond to produce a beta-subunit with a hydroxyl group at its C-terminus and an alpha-subunit with a pyruvoyl group at its N-terminus.

It is found in the cytoplasm. It catalyses the reaction L-aspartate + H(+) = beta-alanine + CO2. Its pathway is cofactor biosynthesis; (R)-pantothenate biosynthesis; beta-alanine from L-aspartate: step 1/1. Its function is as follows. Catalyzes the pyruvoyl-dependent decarboxylation of aspartate to produce beta-alanine. The chain is Aspartate 1-decarboxylase from Mycolicibacterium smegmatis (strain ATCC 700084 / mc(2)155) (Mycobacterium smegmatis).